A 274-amino-acid polypeptide reads, in one-letter code: Thiamine kinase (274 aa).

Belongs to the thiamine kinase family.

It carries out the reaction thiamine + ATP = thiamine phosphate + ADP + H(+). It participates in cofactor biosynthesis; thiamine diphosphate biosynthesis; thiamine phosphate from thiamine: step 1/1. In terms of biological role, catalyzes the ATP-dependent phosphorylation of thiamine to thiamine phosphate. Is involved in thiamine salvage. The sequence is that of Thiamine kinase from Escherichia coli (strain SMS-3-5 / SECEC).